The sequence spans 802 residues: Copal-8-ol diphosphate hydratase, chloroplastic (802 aa).

A chloroplast-targeting transit peptide spans Met-1–Ser-24. Position 249 (Lys-249) interacts with substrate. The Mg(2+) site is built by Asp-382 and Asp-384. Positions Asp-382–Asp-385 match the DXDD motif motif. Lys-468 is a substrate binding site.

Belongs to the terpene synthase family. Requires Mg(2+) as cofactor. As to expression, expressed specifically in the secretory cells of the glandular trichomes.

The protein localises to the plastid. Its subcellular location is the chloroplast. It carries out the reaction (2E,6E,10E)-geranylgeranyl diphosphate + H2O = 8-hydroxycopalyl diphosphate. It functions in the pathway secondary metabolite biosynthesis; terpenoid biosynthesis. Its function is as follows. Class-II terpene synthase that synthesizes 8-hydroxy-copalyl diphosphate. Involved in the biosynthesis of cis-abienol, a labdane diterpene that can be used as synthesis precursor of ambergris substitution fragance products. This chain is Copal-8-ol diphosphate hydratase, chloroplastic, found in Nicotiana tabacum (Common tobacco).